The sequence spans 366 residues: Chorismate synthase (366 aa).

Arg-48 contacts NADP(+). FMN-binding positions include 125-127 (RSS), 241-242 (NA), Gly-285, 300-304 (KPTSS), and Arg-326.

This sequence belongs to the chorismate synthase family. Homotetramer. FMNH2 serves as cofactor.

It catalyses the reaction 5-O-(1-carboxyvinyl)-3-phosphoshikimate = chorismate + phosphate. It functions in the pathway metabolic intermediate biosynthesis; chorismate biosynthesis; chorismate from D-erythrose 4-phosphate and phosphoenolpyruvate: step 7/7. Catalyzes the anti-1,4-elimination of the C-3 phosphate and the C-6 proR hydrogen from 5-enolpyruvylshikimate-3-phosphate (EPSP) to yield chorismate, which is the branch point compound that serves as the starting substrate for the three terminal pathways of aromatic amino acid biosynthesis. This reaction introduces a second double bond into the aromatic ring system. In Ruegeria pomeroyi (strain ATCC 700808 / DSM 15171 / DSS-3) (Silicibacter pomeroyi), this protein is Chorismate synthase.